Here is a 483-residue protein sequence, read N- to C-terminus: MDKFLNNRWAVKIIALLFALLLYVAVNSNQAPTPKKPGESFFPTSTTDEATLTDIPVKAYYDDENYVVTGVPQTVNVTIKGSTSAVKKARQTKNFEIYADMEHLKTGTHKVELKAKNVSDGLTISINPSVTTVTIQERTTKSFPVEVEYYNKSKMKKGYSPEQPIVSPKNVQITGSKNVIDNISLVKASVNLENADETIEKEAKVTVYDKDGNALPVDVEPSVIKITVPVTSPSKKVPFKIERTGSLPDGVSIANIESSPSEVTVYGSQDVLDSLEFIDGVSLDLSKINKDSDIEADIPLPDGVKKISPSKVTLHIEVDSEADQKFENVPIKTVGLSSSQNIEFLDPESQAIDVTAKGSPTNINKLKKSDIELYVNVSDLEDGEHSVKLEVNGPQNVTWSLGRKNAKIKLTSKKSNTSTNDNSSNTSGNQDTDKQTNDQKNNQQEDTKNTDKNNNDQNQDGNKDQNQDQDEDESTANSQSSSE.

A helical transmembrane segment spans residues 9-26 (WAVKIIALLFALLLYVAV). YbbR-like domains lie at 55–135 (IPVK…TVTI), 143–228 (FPVE…KITV), 237–316 (VPFK…TLHI), and 329–394 (VPIK…VNGP). Residues 410–483 (LTSKKSNTST…STANSQSSSE (74 aa)) are disordered. Positions 413–430 (KKSNTSTNDNSSNTSGNQ) are enriched in low complexity. Residues 431 to 454 (DTDKQTNDQKNNQQEDTKNTDKNN) are compositionally biased toward basic and acidic residues.

As to quaternary structure, interacts with CdaA.

It localises to the cell membrane. In terms of biological role, upon coexpression in E.coli stimulates the diadenylate cyclase activity of CdaA about 20-fold. In B.subtilis c-di-AMP is a second messenger that mediates growth, DNA repair and cell wall homeostasis; it is toxic when present in excess. The protein is CdaA regulatory protein CdaR of Bacillus subtilis (strain 168).